Reading from the N-terminus, the 72-residue chain is uncharacterized protein (72 aa).

This sequence belongs to the phage portal family. HK97 subfamily.

This is an uncharacterized protein from Rickettsia conorii (strain ATCC VR-613 / Malish 7).